The chain runs to 297 residues: Nucleotide-binding protein Bphy_0322 (297 aa).

8–15 (GISGSGKS) contacts ATP. 57 to 60 (DARS) contacts GTP.

The protein belongs to the RapZ-like family.

Its function is as follows. Displays ATPase and GTPase activities. The chain is Nucleotide-binding protein Bphy_0322 from Paraburkholderia phymatum (strain DSM 17167 / CIP 108236 / LMG 21445 / STM815) (Burkholderia phymatum).